We begin with the raw amino-acid sequence, 201 residues long: Probable quinol oxidase subunit 3 (201 aa).

5 consecutive transmembrane segments (helical) span residues Leu-20–Leu-40, Leu-62–Tyr-82, Leu-91–Ile-111, Phe-133–Cys-153, and Phe-172–Val-192.

Belongs to the cytochrome c oxidase subunit 3 family.

The protein resides in the cell membrane. It carries out the reaction 2 a quinol + O2 = 2 a quinone + 2 H2O. In terms of biological role, catalyzes quinol oxidation with the concomitant reduction of oxygen to water. This chain is Probable quinol oxidase subunit 3 (qoxC), found in Staphylococcus haemolyticus (strain JCSC1435).